The chain runs to 33 residues: MSDIN-like toxin proprotein 6 (33 aa).

A propeptide spanning residues 1–10 (MSDINATRLP) is cleaved from the precursor. The cyclopeptide (Leu-Pro) cross-link spans 11 to 20 (LILLAALGIP). Residues 21–33 (SDDADSTLTRGER) constitute a propeptide that is removed on maturation.

It belongs to the MSDIN fungal toxin family. Processed by the macrocyclase-peptidase enzyme POPB to yield a toxic cyclic decapeptide. POPB first removes 10 residues from the N-terminus. Conformational trapping of the remaining peptide forces the enzyme to release this intermediate rather than proceed to macrocyclization. The enzyme rebinds the remaining peptide in a different conformation and catalyzes macrocyclization of the N-terminal 10 residues.

Its function is as follows. Probable toxin that belongs to the MSDIN-like toxin family responsible for a large number of food poisoning cases and deaths. In Amanita phalloides (Death cap), this protein is MSDIN-like toxin proprotein 6.